Consider the following 547-residue polypeptide: Inositol 1,4,5-trisphosphate receptor-interacting protein-like 1 (547 aa).

An N-terminal signal peptide occupies residues 1-16 (MAVISLLFLAVMYVVH). The Extracellular portion of the chain corresponds to 17–96 (HPLMVSDRMD…PFQASGQDGG (80 aa)). The stretch at 28-66 (DTLARSRQLEKRMSEEMRQLEIEFEERSRAAEEKQKAEN) forms a coiled coil. Residues 97 to 117 (PLGWMLGNLWNAGLFCLFLIF) traverse the membrane as a helical segment. The Cytoplasmic portion of the chain corresponds to 118 to 547 (ELLRQNMQHE…LPCSPLAGGL (430 aa)).

Belongs to the ITPRIP family.

Its subcellular location is the cell membrane. Its function is as follows. Functions as a ligand of CD3E, inhibiting TCR-CD3 complex signaling to regulate T cell activation. Induces stable CD3E-NCK1 binding, thereby preventing the CD3E-ZAP70 interaction and subsequently inhibiting the activation of the downstream ERK-NFkB signaling cascade and calcium influx. The chain is Inositol 1,4,5-trisphosphate receptor-interacting protein-like 1 (Itpripl1) from Rattus norvegicus (Rat).